Consider the following 447-residue polypeptide: Serine/threonine-protein phosphatase 2A 55 kDa regulatory subunit B gamma isoform (447 aa).

WD repeat units follow at residues 22 to 61 (TEAD…KNAP), 87 to 128 (EIEE…KRPE), 171 to 209 (GHTY…RSFN), 220 to 260 (DLTE…LCDK), 279 to 317 (EIIS…RPIE), 334 to 375 (ENDC…DVTL), and 410 to 446 (DFTK…NSDM).

Belongs to the phosphatase 2A regulatory subunit B family. In terms of assembly, PP2A consists of a common heterodimeric core enzyme, composed of a 36 kDa catalytic subunit (subunit C) and a 65 kDa constant regulatory subunit (PR65 or subunit A), that associates with a variety of regulatory subunits. Proteins that associate with the core dimer include three families of regulatory subunits B (the R2/B/PR55/B55, R3/B''/PR72/PR130/PR59 and R5/B'/B56 families), the 48 kDa variable regulatory subunit, viral proteins, and cell signaling molecules. Interacts with IER5.

In terms of biological role, the B regulatory subunit might modulate substrate selectivity and catalytic activity, and might also direct the localization of the catalytic enzyme to a particular subcellular compartment. The polypeptide is Serine/threonine-protein phosphatase 2A 55 kDa regulatory subunit B gamma isoform (PPP2R2C) (Homo sapiens (Human)).